An 842-amino-acid chain; its full sequence is Elongation factor 2 (842 aa).

Residues 17–253 form the tr-type G domain; it reads TNVRNMSVIA…LWGDSYFNPK (237 aa). GTP is bound by residues 26-33, 158-161, and 213-215; these read AHVDHGKS, NKVD, and SGL. H699 is modified (diphthamide).

The protein belongs to the TRAFAC class translation factor GTPase superfamily. Classic translation factor GTPase family. EF-G/EF-2 subfamily.

Its subcellular location is the cytoplasm. The catalysed reaction is GTP + H2O = GDP + phosphate + H(+). Catalyzes the GTP-dependent ribosomal translocation step during translation elongation. During this step, the ribosome changes from the pre-translocational (PRE) to the post-translocational (POST) state as the newly formed A-site-bound peptidyl-tRNA and P-site-bound deacylated tRNA move to the P and E sites, respectively. Catalyzes the coordinated movement of the two tRNA molecules, the mRNA and conformational changes in the ribosome. This chain is Elongation factor 2 (EFT1), found in Komagataella pastoris (Yeast).